The chain runs to 101 residues: Cilia- and flagella-associated protein 141 (101 aa).

Microtubule inner protein component of sperm flagellar doublet microtubules. In terms of tissue distribution, expressed in airway epithelial cells.

The protein resides in the cytoplasm. Its subcellular location is the cytoskeleton. The protein localises to the cilium axoneme. It localises to the flagellum axoneme. Its function is as follows. Microtubule inner protein (MIP) part of the dynein-decorated doublet microtubules (DMTs) in cilia axoneme, which is required for motile cilia beating. The chain is Cilia- and flagella-associated protein 141 from Homo sapiens (Human).